The primary structure comprises 343 residues: S-adenosylmethionine:tRNA ribosyltransferase-isomerase (343 aa).

It belongs to the QueA family. In terms of assembly, monomer.

The protein resides in the cytoplasm. The enzyme catalyses 7-aminomethyl-7-carbaguanosine(34) in tRNA + S-adenosyl-L-methionine = epoxyqueuosine(34) in tRNA + adenine + L-methionine + 2 H(+). Its pathway is tRNA modification; tRNA-queuosine biosynthesis. Transfers and isomerizes the ribose moiety from AdoMet to the 7-aminomethyl group of 7-deazaguanine (preQ1-tRNA) to give epoxyqueuosine (oQ-tRNA). The chain is S-adenosylmethionine:tRNA ribosyltransferase-isomerase from Enterococcus faecalis (strain ATCC 700802 / V583).